Here is a 490-residue protein sequence, read N- to C-terminus: Dipeptide and tripeptide permease A (490 aa).

Residues 1–34 (MSNANNNQPENVSLNAFKQPRAFYLIFSIELWER) are Cytoplasmic-facing. The helical transmembrane segment at 35–55 (FGYYGLQGIMAVYLVKMLGMT) threads the bilayer. At 56 to 59 (EADS) the chain is on the periplasmic side. A helical transmembrane segment spans residues 60–80 (ITLFSSFSALVYGFVAIGGWL). At 81 to 89 (GDKVLGAKR) the chain is on the cytoplasmic side. The helical transmembrane segment at 90–110 (VIMLGALVLAIGYAFVAYSGH) threads the bilayer. Position 111 (Asp111) is a topological domain, periplasmic. A helical membrane pass occupies residues 112 to 132 (LSLVYVGMATIAVGNGLFKAN). The Cytoplasmic portion of the chain corresponds to 133–153 (PSSLLSTCYEKNDPRLDGAFT). A helical membrane pass occupies residues 154–174 (MYYMSVNIGSFFSMLATPWLA). Residues 175-176 (AR) are Periplasmic-facing. Residues 177-197 (FGWSVAFSLSVVGMLITLVNF) traverse the membrane as a helical segment. Over 198–217 (MMCRRWVKDQGSKPDFAPLQ) the chain is Cytoplasmic. A helical transmembrane segment spans residues 218-238 (VGKLMMTLVGVVILVAISTWL). Residues 239-246 (LHNQTIAR) are Periplasmic-facing. The chain crosses the membrane as a helical span at residues 247–267 (WALAIISAGIILIFAKETFAL). Topologically, residues 268–274 (QGGARRK) are cytoplasmic. The helical transmembrane segment at 275–295 (MIVAFLLMLEAVVFFVLYSQM) threads the bilayer. Residues 296 to 320 (PTSLNFFAIHNVEHSIFGIAFEPEQ) are Periplasmic-facing. The helical transmembrane segment at 321-341 (YQALNPFWIMVASPILAAIYN) threads the bilayer. The Cytoplasmic segment spans residues 342 to 352 (KMGDRLPMPHK). A helical transmembrane segment spans residues 353–373 (FAIGMVLCSGAFLVLPWGASF). Residues 374 to 383 (ANEAGIVSVN) are Periplasmic-facing. A helical membrane pass occupies residues 384–404 (WLILSYALQSIGELMISGLGL). Residues 405-414 (AMVAQLVPQR) are Cytoplasmic-facing. The helical transmembrane segment at 415–435 (LMGFIMGSWFLTTAAAALIAG) threads the bilayer. Residues 436-460 (KVAALTAVPGGEVADPHASLAIYSH) are Periplasmic-facing. The helical transmembrane segment at 461–481 (VFMQIGLATAVIAVLMLLTAP) threads the bilayer. Over 482–490 (KLNRMTLGD) the chain is Cytoplasmic.

It belongs to the major facilitator superfamily. Proton-dependent oligopeptide transporter (POT/PTR) (TC 2.A.17) family. DtpA subfamily.

Its subcellular location is the cell inner membrane. Proton-dependent permease that transports di- and tripeptides. The protein is Dipeptide and tripeptide permease A of Edwardsiella piscicida.